A 652-amino-acid chain; its full sequence is Beta-glucuronidase (652 aa).

The first 22 residues, 1-22 (MVRGPAGAWAVLGPLLWGCGLA), serve as a signal peptide directing secretion. N-linked (GlcNAc...) asparagine glycans are attached at residues asparagine 173 and asparagine 420. Glutamate 451 serves as the catalytic Proton donor. N-linked (GlcNAc...) asparagine glycosylation is present at asparagine 631.

Belongs to the glycosyl hydrolase 2 family. Homotetramer.

The protein localises to the lysosome. It carries out the reaction a beta-D-glucuronoside + H2O = D-glucuronate + an alcohol. With respect to regulation, inhibited by L-aspartic acid. Functionally, plays an important role in the degradation of dermatan and keratan sulfates. This chain is Beta-glucuronidase (GUSB), found in Sus scrofa (Pig).